A 130-amino-acid polypeptide reads, in one-letter code: Small ribosomal subunit protein uS9 (130 aa).

The disordered stretch occupies residues 109–130; it reads RMKERKKYGLKAARRAPQFSKR. A compositionally biased stretch (basic residues) spans 111 to 130; that stretch reads KERKKYGLKAARRAPQFSKR.

This sequence belongs to the universal ribosomal protein uS9 family.

In Lachnoclostridium phytofermentans (strain ATCC 700394 / DSM 18823 / ISDg) (Clostridium phytofermentans), this protein is Small ribosomal subunit protein uS9.